Consider the following 131-residue polypeptide: Small ribosomal subunit protein uS8 (131 aa).

This sequence belongs to the universal ribosomal protein uS8 family. As to quaternary structure, part of the 30S ribosomal subunit. Contacts proteins S5 and S12.

One of the primary rRNA binding proteins, it binds directly to 16S rRNA central domain where it helps coordinate assembly of the platform of the 30S subunit. The polypeptide is Small ribosomal subunit protein uS8 (Acholeplasma laidlawii (strain PG-8A)).